Reading from the N-terminus, the 670-residue chain is Oligopeptidase PepF (670 aa).

Residue histidine 456 participates in Zn(2+) binding. Glutamate 457 is a catalytic residue. Zn(2+) contacts are provided by histidine 460 and histidine 463.

This sequence belongs to the peptidase M3B family. Requires Zn(2+) as cofactor.

It is found in the cytoplasm. Functionally, overexpression results in inhibition of sporulation initiation. This sporulation deficiency could be the result of hydrolysis by PepF of the PhrA peptide, a phosphatase regulator. Thus, overexpression of PepF appears to act at the level of the phosphorelay, most likely through modulation of the negative role played by phosphatases. Overexpression of PepF also affects the activity of the competence and sporulation stimulating factor PhrC. This chain is Oligopeptidase PepF, found in Bacillus subtilis (strain 168).